The chain runs to 92 residues: MPRSVWKGPFVDGYLLKKAEKSHEGGRKQAIKTWSRRSTIMPQFVGLTFQVHNGNKFVPVLVTEDMVGHKLGEFSPSRTYYGHAADKKAKRR.

The tract at residues 73–92 (EFSPSRTYYGHAADKKAKRR) is disordered.

The protein belongs to the universal ribosomal protein uS19 family.

Protein S19 forms a complex with S13 that binds strongly to the 16S ribosomal RNA. This Maricaulis maris (strain MCS10) (Caulobacter maris) protein is Small ribosomal subunit protein uS19.